Reading from the N-terminus, the 204-residue chain is MANPIKIGIGGPVGAGKTQLIEKVVKRLSKEMSIGVITNDIYTKEDEKILVNSGVLPESRIIGVETGGCPHTAIREDASMNFAAIDELLERHDDIELIFIESGGDNLAATFSPELVDFSIYIIDVAQGEKIPRKGGQGMIKSDFFIINKTDLAPYVGASLEQMAEDTKVFRGKRPFTFTNLKTDEGLDEVIDWIERDTLLKGLS.

11-18 (GPVGAGKT) serves as a coordination point for GTP.

The protein belongs to the SIMIBI class G3E GTPase family. UreG subfamily. In terms of assembly, homodimer. UreD, UreF and UreG form a complex that acts as a GTP-hydrolysis-dependent molecular chaperone, activating the urease apoprotein by helping to assemble the nickel containing metallocenter of UreC. The UreE protein probably delivers the nickel.

It localises to the cytoplasm. Its function is as follows. Facilitates the functional incorporation of the urease nickel metallocenter. This process requires GTP hydrolysis, probably effectuated by UreG. The protein is Urease accessory protein UreG of Staphylococcus aureus (strain MSSA476).